Reading from the N-terminus, the 316-residue chain is Transaldolase (316 aa).

The active-site Schiff-base intermediate with substrate is the K125.

It belongs to the transaldolase family. Type 1 subfamily. In terms of assembly, homodimer.

Its subcellular location is the cytoplasm. It carries out the reaction D-sedoheptulose 7-phosphate + D-glyceraldehyde 3-phosphate = D-erythrose 4-phosphate + beta-D-fructose 6-phosphate. It functions in the pathway carbohydrate degradation; pentose phosphate pathway; D-glyceraldehyde 3-phosphate and beta-D-fructose 6-phosphate from D-ribose 5-phosphate and D-xylulose 5-phosphate (non-oxidative stage): step 2/3. Functionally, transaldolase is important for the balance of metabolites in the pentose-phosphate pathway. The sequence is that of Transaldolase from Acidovorax ebreus (strain TPSY) (Diaphorobacter sp. (strain TPSY)).